Consider the following 454-residue polypeptide: tRNA modification GTPase MnmE (454 aa).

Residues R23, E80, and K120 each coordinate (6S)-5-formyl-5,6,7,8-tetrahydrofolate. One can recognise a TrmE-type G domain in the interval 216–377; sequence GMKVVIAGKP…LRTHLKQSMG (162 aa). N226 serves as a coordination point for K(+). GTP contacts are provided by residues 226–231, 245–251, 270–273, and 335–338; these read NAGKSS, TAIAGTT, DTAG, and NKAD. S230 is a Mg(2+) binding site. 3 residues coordinate K(+): T245, I247, and T250. Mg(2+) is bound at residue T251. K454 contacts (6S)-5-formyl-5,6,7,8-tetrahydrofolate.

It belongs to the TRAFAC class TrmE-Era-EngA-EngB-Septin-like GTPase superfamily. TrmE GTPase family. In terms of assembly, homodimer. Heterotetramer of two MnmE and two MnmG subunits. K(+) serves as cofactor.

The protein localises to the cytoplasm. In terms of biological role, exhibits a very high intrinsic GTPase hydrolysis rate. Involved in the addition of a carboxymethylaminomethyl (cmnm) group at the wobble position (U34) of certain tRNAs, forming tRNA-cmnm(5)s(2)U34. In Sodalis glossinidius (strain morsitans), this protein is tRNA modification GTPase MnmE.